The chain runs to 101 residues: Chaperone modulatory protein CbpM (101 aa).

This sequence belongs to the CbpM family.

Its function is as follows. Interacts with CbpA and inhibits both the DnaJ-like co-chaperone activity and the DNA binding activity of CbpA. Together with CbpA, modulates the activity of the DnaK chaperone system. Does not inhibit the co-chaperone activity of DnaJ. This chain is Chaperone modulatory protein CbpM, found in Salmonella paratyphi A (strain ATCC 9150 / SARB42).